The following is a 308-amino-acid chain: Isoaspartyl peptidase/L-asparaginase (308 aa).

Met1 carries the N-acetylmethionine modification. The active-site Nucleophile is the Thr168. Substrate is bound by residues 196 to 199 and 219 to 222; these read RVGD and TGHG.

Belongs to the Ntn-hydrolase family. Heterodimer of an alpha and beta chain produced by autocleavage. This heterodimer may then dimerize in turn, giving rise to a heterotetramer. Post-translationally, cleaved into an alpha and beta chain by autocatalysis; this activates the enzyme. The N-terminal residue of the beta subunit is responsible for the nucleophile hydrolase activity. As to expression, expressed in brain, kidney, testis and tissues of the gastrointestinal tract. Present in sperm (at protein level). Over-expressed in uterine, mammary, prostatic and ovarian carcinoma.

It is found in the cytoplasm. The catalysed reaction is L-asparagine + H2O = L-aspartate + NH4(+). It carries out the reaction Cleavage of a beta-linked Asp residue from the N-terminus of a polypeptide.. Its activity is regulated as follows. Glycine accelerates autocleavage into an alpha and beta chain. Has both L-asparaginase and beta-aspartyl peptidase activity. May be involved in the production of L-aspartate, which can act as an excitatory neurotransmitter in some brain regions. Is highly active with L-Asp beta-methyl ester. Besides, has catalytic activity toward beta-aspartyl dipeptides and their methyl esters, including beta-L-Asp-L-Phe, beta-L-Asp-L-Phe methyl ester (aspartame), beta-L-Asp-L-Ala, beta-L-Asp-L-Leu and beta-L-Asp-L-Lys. Does not have aspartylglucosaminidase activity and is inactive toward GlcNAc-L-Asn. Likewise, has no activity toward glutamine. In Homo sapiens (Human), this protein is Isoaspartyl peptidase/L-asparaginase (ASRGL1).